Consider the following 376-residue polypeptide: Protein-glutamate methylesterase/protein-glutamine glutaminase 1 (376 aa).

In terms of domain architecture, Response regulatory spans K4–L121. At D55 the chain carries 4-aspartylphosphate. Residues R138–A169 are disordered. Over residues A141–T158 the composition is skewed to polar residues. The region spanning S183 to A376 is the CheB-type methylesterase domain. Residues S195, H222, and D318 contribute to the active site.

The protein belongs to the CheB family. Phosphorylated by CheA. Phosphorylation of the N-terminal regulatory domain activates the methylesterase activity.

It is found in the cytoplasm. The enzyme catalyses [protein]-L-glutamate 5-O-methyl ester + H2O = L-glutamyl-[protein] + methanol + H(+). The catalysed reaction is L-glutaminyl-[protein] + H2O = L-glutamyl-[protein] + NH4(+). Involved in chemotaxis. Part of a chemotaxis signal transduction system that modulates chemotaxis in response to various stimuli. Catalyzes the demethylation of specific methylglutamate residues introduced into the chemoreceptors (methyl-accepting chemotaxis proteins or MCP) by CheR. Also mediates the irreversible deamidation of specific glutamine residues to glutamic acid. The protein is Protein-glutamate methylesterase/protein-glutamine glutaminase 1 of Vibrio vulnificus (strain YJ016).